Consider the following 273-residue polypeptide: Putative pyruvate, phosphate dikinase regulatory protein (273 aa).

149–156 (GPSRTSKT) lines the ADP pocket.

Belongs to the pyruvate, phosphate/water dikinase regulatory protein family. PDRP subfamily.

It carries out the reaction N(tele)-phospho-L-histidyl/L-threonyl-[pyruvate, phosphate dikinase] + ADP = N(tele)-phospho-L-histidyl/O-phospho-L-threonyl-[pyruvate, phosphate dikinase] + AMP + H(+). The enzyme catalyses N(tele)-phospho-L-histidyl/O-phospho-L-threonyl-[pyruvate, phosphate dikinase] + phosphate + H(+) = N(tele)-phospho-L-histidyl/L-threonyl-[pyruvate, phosphate dikinase] + diphosphate. Its function is as follows. Bifunctional serine/threonine kinase and phosphorylase involved in the regulation of the pyruvate, phosphate dikinase (PPDK) by catalyzing its phosphorylation/dephosphorylation. The protein is Putative pyruvate, phosphate dikinase regulatory protein of Rickettsia typhi (strain ATCC VR-144 / Wilmington).